The sequence spans 149 residues: L-alanine exporter AlaE (149 aa).

4 consecutive transmembrane segments (helical) span residues 16 to 36, 46 to 66, 85 to 105, and 112 to 132; these read FAMV…LSGM, LVAI…RDAI, VLAY…TVGA, and AAVS…GYFL.

The protein belongs to the AlaE exporter family.

It is found in the cell inner membrane. In terms of biological role, exports L-alanine. This is L-alanine exporter AlaE from Citrobacter koseri (strain ATCC BAA-895 / CDC 4225-83 / SGSC4696).